A 117-amino-acid polypeptide reads, in one-letter code: Venom nerve growth factor (117 aa).

Intrachain disulfides connect C12/C77, C55/C105, and C65/C107. N21 carries an N-linked (GlcNAc...) asparagine glycan.

The protein belongs to the NGF-beta family. In terms of assembly, homodimer; non-covalently linked. Expressed by the venom gland.

The protein resides in the secreted. In terms of biological role, nerve growth factor is important for the development and maintenance of the sympathetic and sensory nervous systems. It stimulates division and differentiation of sympathetic and embryonic sensory neurons as well as basal forebrain cholinergic neurons in the brain. Its relevance in the snake venom is not clear. However, it has been shown to inhibit metalloproteinase-dependent proteolysis of platelet glycoprotein Ib alpha, suggesting a metalloproteinase inhibition to prevent metalloprotease autodigestion and/or protection against prey proteases. Binds a lipid between the two protein chains in the homodimer. The lipid-bound form promotes histamine relase from mouse mast cells, contrary to the lipid-free form. In Daboia russelii (Russel's viper), this protein is Venom nerve growth factor.